Consider the following 546-residue polypeptide: Flavin-dependent oxygenase ucdF (546 aa).

The region spanning 81–263 is the FAD-binding PCMH-type domain; that stretch reads QGRIPYYAVM…VNTTIRTFPD (183 aa).

It belongs to the oxygen-dependent FAD-linked oxidoreductase family.

Nonribosomal peptide synthetase that mediates the biosynthesis of usterphenyllins and uscandidusins, p-terphenyl derivatives. The function of ucdF within the pathway still remains to be determined. UcdE further prenylates position C-14 of ring C of usterphenyllin B to form usterphenyllin A. The pathway begin with the biosynthesis of 4-hydroxyphenylpyruvate (HPPA) from L-tyrosine, possibly by the aminotransferase ucdG. The nonribosomal peptide synthetase ucdA then condenses two HPPA units to produce atromentin. The key step in this pathway is the reduction and dehydration of atromentin to form a terphenyl triol intermediate, performed by the NAD-dependent dehydrogenase ucdB. Further O-methylation by the methyltransferase ucdC forms terphenyllin carrying two methoxy moieties at C-9 and C-12, and subsequent dihydroxylation at C-3 of ring A and C-15 of ring C by the flavin-dependent oxygenase ucdD leads to 3,15-dihydroxyterphenyllin. Prenylation by ucdE at position C-5 of ring A forms usterphenyllin B, and is followed by a second prenylation at position C-14 of ring C to form usterphenyllin A. The following furan ring formation that leads to uscandidusins A and B was proven to be an unexpected spontaneous non-enzymatic reaction. The chain is Flavin-dependent oxygenase ucdF from Aspergillus ustus.